Reading from the N-terminus, the 370-residue chain is Elongation factor Ts, mitochondrial (370 aa).

The transit peptide at 1–29 directs the protein to the mitochondrion; the sequence is MALLSAAPRALRLPRRLPLGAALPALRAL.

This sequence belongs to the EF-Ts family.

It localises to the mitochondrion. Associates with the EF-Tu.GDP complex and induces the exchange of GDP to GTP. It remains bound to the aminoacyl-tRNA.EF-Tu.GTP complex up to the GTP hydrolysis stage on the ribosome. The chain is Elongation factor Ts, mitochondrial from Cryptococcus neoformans var. neoformans serotype D (strain B-3501A) (Filobasidiella neoformans).